A 145-amino-acid polypeptide reads, in one-letter code: UPF0735 ACT domain-containing protein CPE1414 (145 aa).

Residues 69–144 (IFNMVVTHEK…GVEKVEFVAM (76 aa)) enclose the ACT domain.

The protein belongs to the UPF0735 family.

This is UPF0735 ACT domain-containing protein CPE1414 from Clostridium perfringens (strain 13 / Type A).